The following is a 756-amino-acid chain: Serine/threonine-protein kinase CBK1 (756 aa).

Disordered regions lie at residues 1–180 (MYNS…SYSS) and 242–261 (QQQQ…NNGT). Residues 23-34 (QQQDQQHQQQQQ) show a composition bias toward low complexity. The segment covering 53 to 77 (FSSNYMKEQGSHQSLQEHLQRETGN) has biased composition (polar residues). Phosphothreonine is present on Thr-109. Polar residues predominate over residues 120-180 (HNNNSQSMVQ…TLRSNGSYSS (61 aa)). The segment covering 242 to 255 (QQQQQQQSQSPVQS) has biased composition (low complexity). Positions 352–672 (FHTVKVIGKG…ADEIKSHPFF (321 aa)) constitute a Protein kinase domain. Residues 358-366 (IGKGAFGEV) and Lys-381 each bind ATP. The active-site Proton acceptor is the Asp-475. The AGC-kinase C-terminal domain maps to 673-754 (RGVDWNTIRQ…SRFDYLTRKN (82 aa)). Residues 707-732 (NVPDSPAMAQAAKQREQMTKQGGSAP) are disordered.

It belongs to the protein kinase superfamily. STE Ser/Thr protein kinase family. COT1 subfamily. As to quaternary structure, associates with PAG1/TAO3 and interacts with MOB2.

The catalysed reaction is L-seryl-[protein] + ATP = O-phospho-L-seryl-[protein] + ADP + H(+). It catalyses the reaction L-threonyl-[protein] + ATP = O-phospho-L-threonyl-[protein] + ADP + H(+). Its function is as follows. Protein kinase that seems to play a role in the regulation of cell morphogenesis and proliferation. The polypeptide is Serine/threonine-protein kinase CBK1 (CBK1) (Saccharomyces cerevisiae (strain ATCC 204508 / S288c) (Baker's yeast)).